A 258-amino-acid polypeptide reads, in one-letter code: Alpha-fibrinogenase albofibrase (258 aa).

Residues 1 to 18 form the signal peptide; it reads MVLIRVLANLLILQLSYA. The propeptide occupies 19-24; that stretch reads QKSSEL. The Peptidase S1 domain maps to 25-249; that stretch reads VVGGDECNIN…YNDWIQSIIA (225 aa). Intrachain disulfides connect Cys31–Cys163, Cys50–Cys66, Cys98–Cys256, Cys142–Cys210, Cys174–Cys189, and Cys200–Cys225. The N-linked (GlcNAc...) asparagine glycan is linked to Asn44. Active-site charge relay system residues include His65 and Asp110. Residue Ser204 is the Charge relay system of the active site.

This sequence belongs to the peptidase S1 family. Snake venom subfamily. Monomer. In terms of tissue distribution, expressed by the venom gland.

Its subcellular location is the secreted. The recombinant protein has fibrinogenolytic activity against the Aalpha chain (FGA) of fibrinogen. Activates plasminogen (PLG) (is 4-fold less active than urokinase). Has weak thrombin-like enzyme activity. Has enzymatic activity against a trypsin-like substrate (S-3013) and shows a weaker activity on an activated protein C substrate (S-3125). The chain is Alpha-fibrinogenase albofibrase from Trimeresurus albolabris (White-lipped pit viper).